The sequence spans 124 residues: UPF0738 protein GWCH70_0774 (124 aa).

This sequence belongs to the UPF0738 family.

The chain is UPF0738 protein GWCH70_0774 from Geobacillus sp. (strain WCH70).